A 29-amino-acid polypeptide reads, in one-letter code: Trypsin inhibitor 3 (29 aa).

3 disulfides stabilise this stretch: cysteine 3-cysteine 20, cysteine 10-cysteine 22, and cysteine 16-cysteine 28.

The protein belongs to the protease inhibitor I7 (squash-type serine protease inhibitor) family.

It is found in the secreted. Strongly inhibits trypsin, weakly inhibits chymotrypsin. In Cyclanthera pedata (Achocha), this protein is Trypsin inhibitor 3.